A 270-amino-acid chain; its full sequence is Shikimate dehydrogenase (NADP(+)) (270 aa).

Shikimate contacts are provided by residues 14–16 and threonine 61; that span reads SLS. Lysine 65 functions as the Proton acceptor in the catalytic mechanism. An NADP(+)-binding site is contributed by aspartate 77. Shikimate-binding residues include asparagine 86 and aspartate 101. NADP(+) is bound by residues 125–129 and isoleucine 210; that span reads GNGGA. Residue tyrosine 212 coordinates shikimate. Glycine 233 lines the NADP(+) pocket.

Belongs to the shikimate dehydrogenase family. In terms of assembly, homodimer.

The catalysed reaction is shikimate + NADP(+) = 3-dehydroshikimate + NADPH + H(+). The protein operates within metabolic intermediate biosynthesis; chorismate biosynthesis; chorismate from D-erythrose 4-phosphate and phosphoenolpyruvate: step 4/7. Functionally, involved in the biosynthesis of the chorismate, which leads to the biosynthesis of aromatic amino acids. Catalyzes the reversible NADPH linked reduction of 3-dehydroshikimate (DHSA) to yield shikimate (SA). This is Shikimate dehydrogenase (NADP(+)) from Clostridium beijerinckii (strain ATCC 51743 / NCIMB 8052) (Clostridium acetobutylicum).